Reading from the N-terminus, the 1167-residue chain is Non-toxic nonhemagglutinin (1167 aa).

A light chain nLC region spans residues 1 to 381; that stretch reads MDIIDNVDIT…PQQIINLIDN (381 aa). Residues 382 to 804 are N-heavy chain nHN; sequence NNILLIKSYI…LFNSKIQLTI (423 aa). The segment at 805–1167 is C-heavy chain nHC; it reads KNEKPEYNLL…LNDIYSWTLI (363 aa).

The protein belongs to the botulism non-toxic nonhemagglutinin family.

In terms of biological role, expression of the ptox operon (ntnh-orfX1-orfX2-orfX3-pmp1) in B.thuringiensis kills Anopheles but not Aedes mosquito 3rd instar larvae. The ntnh-pmp1 construct is about half as toxic. The chain is Non-toxic nonhemagglutinin from Paraclostridium bifermentans (Clostridium bifermentans).